A 1374-amino-acid chain; its full sequence is Alpha,alpha-trehalose-phosphate synthase [UDP-forming] 1 (1374 aa).

Disordered regions lie at residues 28–66 (DTGKVPTAPPDVFFSTENEPEDCTPVKMDPFDRPKSDKD), 86–117 (YTPGKEKGVDQDESDDMTESEDHDEMAKDDEG), and 1352–1374 (KADSYYDDSDTPMDQEDTPSKQQ). Composition is skewed to basic and acidic residues over residues 56-66 (DPFDRPKSDKD) and 86-95 (YTPGKEKGVD). 2 stretches are compositionally biased toward acidic residues: residues 96–109 (QDESDDMTESEDHD) and 1356–1368 (YYDDSDTPMDQED).

The protein in the N-terminal section; belongs to the glycosyltransferase 20 family. This sequence in the C-terminal section; belongs to the gob-1 trehalose phosphatase family.

The catalysed reaction is D-glucose 6-phosphate + UDP-alpha-D-glucose = alpha,alpha-trehalose 6-phosphate + UDP + H(+). In terms of biological role, catalyzes the production of trehalose from glucose-6-phosphate and UDP-alpha-D-glucose in a 2 step process. The chain is Alpha,alpha-trehalose-phosphate synthase [UDP-forming] 1 (tps-1) from Caenorhabditis briggsae.